Here is a 171-residue protein sequence, read N- to C-terminus: Small ribosomal subunit protein uS4 (171 aa).

Positions 103 to 167 (RRLQTLVHKR…SPMKKQIEAA (65 aa)) constitute an S4 RNA-binding domain.

It belongs to the universal ribosomal protein uS4 family. Part of the 30S ribosomal subunit. Contacts protein S5. The interaction surface between S4 and S5 is involved in control of translational fidelity.

One of the primary rRNA binding proteins, it binds directly to 16S rRNA where it nucleates assembly of the body of the 30S subunit. In terms of biological role, with S5 and S12 plays an important role in translational accuracy. The protein is Small ribosomal subunit protein uS4 of Methanothermobacter thermautotrophicus (strain ATCC 29096 / DSM 1053 / JCM 10044 / NBRC 100330 / Delta H) (Methanobacterium thermoautotrophicum).